We begin with the raw amino-acid sequence, 248 residues long: UPF0280 protein Maeo_0343 (248 aa).

The protein belongs to the UPF0280 family.

The protein is UPF0280 protein Maeo_0343 of Methanococcus aeolicus (strain ATCC BAA-1280 / DSM 17508 / OCM 812 / Nankai-3).